The sequence spans 142 residues: Transcription antitermination protein NusB (142 aa).

It belongs to the NusB family.

In terms of biological role, involved in transcription antitermination. Required for transcription of ribosomal RNA (rRNA) genes. Binds specifically to the boxA antiterminator sequence of the ribosomal RNA (rrn) operons. This Thermobifida fusca (strain YX) protein is Transcription antitermination protein NusB.